Consider the following 320-residue polypeptide: Malate dehydrogenase (320 aa).

NAD(+)-binding positions include 10–15 (GSGMIG) and D34. Substrate-binding residues include R83 and R89. NAD(+) contacts are provided by residues N96 and 119–121 (ITN). Substrate-binding residues include N121 and R152. The active-site Proton acceptor is H176.

It belongs to the LDH/MDH superfamily. MDH type 3 family.

The catalysed reaction is (S)-malate + NAD(+) = oxaloacetate + NADH + H(+). Functionally, catalyzes the reversible oxidation of malate to oxaloacetate. The sequence is that of Malate dehydrogenase from Brucella abortus (strain S19).